The following is a 221-amino-acid chain: Protein-L-isoaspartate O-methyltransferase (221 aa).

Ser-57 is a catalytic residue.

It belongs to the methyltransferase superfamily. L-isoaspartyl/D-aspartyl protein methyltransferase family.

The protein localises to the cytoplasm. The catalysed reaction is [protein]-L-isoaspartate + S-adenosyl-L-methionine = [protein]-L-isoaspartate alpha-methyl ester + S-adenosyl-L-homocysteine. In terms of biological role, catalyzes the methyl esterification of L-isoaspartyl residues in peptides and proteins that result from spontaneous decomposition of normal L-aspartyl and L-asparaginyl residues. It plays a role in the repair and/or degradation of damaged proteins. The protein is Protein-L-isoaspartate O-methyltransferase of Korarchaeum cryptofilum (strain OPF8).